A 224-amino-acid chain; its full sequence is UPF0758 protein VSAL_I0192 (224 aa).

The 123-residue stretch at 102 to 224 (ALTSPEHTKR…IVSFAERGWI (123 aa)) folds into the MPN domain. The Zn(2+) site is built by H173, H175, and D186. Positions 173 to 186 (HNHPSGVAEPSQAD) match the JAMM motif motif.

Belongs to the UPF0758 family.

This chain is UPF0758 protein VSAL_I0192, found in Aliivibrio salmonicida (strain LFI1238) (Vibrio salmonicida (strain LFI1238)).